A 119-amino-acid chain; its full sequence is Large ribosomal subunit protein bL20 (119 aa).

It belongs to the bacterial ribosomal protein bL20 family.

Functionally, binds directly to 23S ribosomal RNA and is necessary for the in vitro assembly process of the 50S ribosomal subunit. It is not involved in the protein synthesizing functions of that subunit. This chain is Large ribosomal subunit protein bL20, found in Cellvibrio japonicus (strain Ueda107) (Pseudomonas fluorescens subsp. cellulosa).